A 344-amino-acid chain; its full sequence is Acireductone dioxygenase (344 aa).

The Fe(2+) site is built by H92, H94, E98, and H137. Ni(2+)-binding residues include H92, H94, E98, and H137.

Belongs to the acireductone dioxygenase (ARD) family. It depends on Fe(2+) as a cofactor. Ni(2+) is required as a cofactor.

It localises to the cytoplasm. The protein resides in the nucleus. It catalyses the reaction 1,2-dihydroxy-5-(methylsulfanyl)pent-1-en-3-one + O2 = 4-methylsulfanyl-2-oxobutanoate + formate + 2 H(+). The enzyme catalyses 1,2-dihydroxy-5-(methylsulfanyl)pent-1-en-3-one + O2 = 3-(methylsulfanyl)propanoate + CO + formate + 2 H(+). It participates in amino-acid biosynthesis; L-methionine biosynthesis via salvage pathway; L-methionine from S-methyl-5-thio-alpha-D-ribose 1-phosphate: step 5/6. In terms of biological role, catalyzes 2 different reactions between oxygen and the acireductone 1,2-dihydroxy-3-keto-5-methylthiopentene (DHK-MTPene) depending upon the metal bound in the active site. Fe-containing acireductone dioxygenase (Fe-ARD) produces formate and 2-keto-4-methylthiobutyrate (KMTB), the alpha-ketoacid precursor of methionine in the methionine recycle pathway. Ni-containing acireductone dioxygenase (Ni-ARD) produces methylthiopropionate, carbon monoxide and formate, and does not lie on the methionine recycle pathway. The chain is Acireductone dioxygenase from Leishmania braziliensis.